A 132-amino-acid chain; its full sequence is uncharacterized protein (132 aa).

This is an uncharacterized protein from Caenorhabditis elegans.